Here is a 298-residue protein sequence, read N- to C-terminus: Acetylglutamate kinase (298 aa).

Substrate-binding positions include 68–69 (GG), Arg90, and Asn195.

The protein belongs to the acetylglutamate kinase family. ArgB subfamily.

Its subcellular location is the cytoplasm. It carries out the reaction N-acetyl-L-glutamate + ATP = N-acetyl-L-glutamyl 5-phosphate + ADP. Its pathway is amino-acid biosynthesis; L-arginine biosynthesis; N(2)-acetyl-L-ornithine from L-glutamate: step 2/4. In terms of biological role, catalyzes the ATP-dependent phosphorylation of N-acetyl-L-glutamate. This Hydrogenovibrio crunogenus (strain DSM 25203 / XCL-2) (Thiomicrospira crunogena) protein is Acetylglutamate kinase.